The following is a 251-amino-acid chain: Small ribosomal subunit protein uS2 (251 aa).

Belongs to the universal ribosomal protein uS2 family.

This chain is Small ribosomal subunit protein uS2, found in Synechococcus elongatus (strain ATCC 33912 / PCC 7942 / FACHB-805) (Anacystis nidulans R2).